The following is a 928-amino-acid chain: Retinoblastoma-associated protein (928 aa).

The segment at 1–42 (MPPKTPRKTAATAAAAAAEPPAPPPPPPPEEDPEQDSGPEDL) is disordered. At proline 2 the chain carries N,N-dimethylproline. Over residues 8–19 (KTAATAAAAAAE) the composition is skewed to low complexity. The span at 29–39 (PEEDPEQDSGP) shows a compositional bias: acidic residues. The residue at position 37 (serine 37) is a Phosphoserine. Phosphoserine; by CDK1 is present on serine 249. Position 252 is a phosphothreonine; by CDK1 (threonine 252). Threonine 356 carries the post-translational modification Phosphothreonine. Threonine 373 is modified (phosphothreonine; by CDK1). Residues 373–579 (TPVRTVMNTI…FDLIKQSKDR (207 aa)) form a domain A region. Positions 373-771 (TPVRTVMNTI…QRLKTNILQY (399 aa)) are pocket; binds T and E1A. Serine 567 is subject to Phosphoserine; by CDK2. Residues 580–639 (EGPTDHLESACPLNLPLQNNHTAADMYLSPVRSPKKKGSTTRVNSTANAETQATSAFQTQ) form a spacer region. A Phosphoserine modification is found at serine 608. Residues 610-632 (VRSPKKKGSTTRVNSTANAETQA) are disordered. Serine 612 is subject to Phosphoserine; by CHEK2 and CHEK1. Polar residues predominate over residues 619 to 632 (TTRVNSTANAETQA). Serine 624 is modified (phosphoserine). The tract at residues 640 to 771 (KPLKSTSLSL…QRLKTNILQY (132 aa)) is domain B. The tract at residues 763 to 928 (RLKTNILQYA…SMDTSNKEEK (166 aa)) is interaction with LIMD1. Residues 771–928 (YASTRPPTLS…SMDTSNKEEK (158 aa)) form a domain C; mediates interaction with E4F1 region. Serine 780, serine 788, and serine 795 each carry phosphoserine. A Phosphoserine; by CDK1 and CDK3 modification is found at serine 807. At lysine 810 the chain carries N6-methyllysine; by SMYD2. Serine 811 bears the Phosphoserine; by CDK1 and CDK3 mark. The residue at position 821 (threonine 821) is a Phosphothreonine; by CDK6. Threonine 823 carries the post-translational modification Phosphothreonine. A Phosphothreonine; by CDK4 modification is found at threonine 826. Threonine 841 bears the Phosphothreonine mark. Serine 855 carries the phosphoserine modification. Lysine 860 carries the N6-methyllysine; by SMYD2 modification. The Bipartite nuclear localization signal signature appears at 860-876 (KRSAEGSNPPKPLKKLR). Residues 860 to 928 (KRSAEGSNPP…SMDTSNKEEK (69 aa)) are disordered. Lysine 873 and lysine 874 each carry N6-acetyllysine; by PCAF. Residues 915-928 (KMNDSMDTSNKEEK) show a composition bias toward basic and acidic residues.

It belongs to the retinoblastoma protein (RB) family. As to quaternary structure, the hypophosphorylated form interacts with and sequesters the E2F1 transcription factor, thereby inhibiting E2F1 transcription. Interacts with heterodimeric E2F/DP transcription factor complexes containing TFDP1 and either E2F1, E2F3, E2F4 or E2F5, or TFDP2 and E2F4. Interacts (when hyperphosphorylated and hypophosphorylated) with PKP3; the interaction inhibits RB1 interaction with and repression of the transcription factor E2F1, potentially via sequestering RB1 to the cytoplasm. The unphosphorylated form interacts with EID1, ARID3B, KDM5A, SUV39H1, MJD2A/JHDM3A and THOC1. Interacts with the N-terminal domain of TAF1. Interacts with SNW1, ATAD5, AATF, DNMT1, LIN9, LMNA, KMT5B, KMT5C, PELP1, UHRF2 and TMPO-alpha. Interacts with GRIP1 and UBR4. Interacts with ARID4A and KDM5B. Interacts with E4F1 and LIMD1. Interacts with SMARCA4/BRG1 and HDAC1. Interacts with PSMA3 and USP4. Interacts (when methylated at Lys-860) with L3MBTL1. Interacts with CHEK2; phosphorylates RB1. Interacts with CDK1 and CDK2. Interacts with PRMT2. Interacts with CEBPA. P-TEFB complex interacts with RB1; promotes phosphorylation of RB1. Interacts with RBBP9; the interaction disrupts RB1 binding to E2F1. Interacts with KAT2B/PCAF and EP300/P300. Interacts with PAX5. Interacts (phosphorylated and unphosphorylated) with BLCAP. May interact with NDC80. In terms of assembly, (Microbial infection) Interacts with adenovirus E1A protein. (Microbial infection) Interacts with HPV E7 protein. As to quaternary structure, (Microbial infection) Interacts with SV40 large T antigen. In terms of assembly, (Microbial infection) Interacts with human cytomegalovirus/HHV-5 proteins UL82 and UL123. (Microbial infection) Interacts with molluscum contagiosum virus protein MC007. Post-translationally, phosphorylated by CDK6 and CDK4, and subsequently by CDK2 at Ser-567 in G1, thereby releasing E2F1 which is then able to activate cell growth. Dephosphorylated at the late M phase. SV40 large T antigen, HPV E7 and adenovirus E1A bind to the underphosphorylated, active form of pRb. Phosphorylation at Thr-821 and Thr-826 promotes interaction between the C-terminal domain C and the Pocket domain, and thereby inhibits interactions with heterodimeric E2F/DP transcription factor complexes. Dephosphorylated at Ser-795 by calcineruin upon calcium stimulation. CDK3/cyclin-C-mediated phosphorylation at Ser-807 and Ser-811 is required for G0-G1 transition. Phosphorylated by CDK1 and CDK2 upon TGFB1-mediated apoptosis. In terms of processing, N-terminus is methylated by METTL11A/NTM1. Monomethylation at Lys-810 by SMYD2 enhances phosphorylation at Ser-807 and Ser-811, and promotes cell cycle progression. Monomethylation at Lys-860 by SMYD2 promotes interaction with L3MBTL1. Acetylated during keratinocyte differentiation. Acetylation at Lys-873 and Lys-874 regulates subcellular localization. Can be deacetylated by SIRT1. As to expression, expressed in the retina. Expressed in foreskin keratinocytes (at protein level).

It is found in the nucleus. The protein resides in the cytoplasm. Functionally, tumor suppressor that is a key regulator of the G1/S transition of the cell cycle. The hypophosphorylated form binds transcription regulators of the E2F family, preventing transcription of E2F-responsive genes. Both physically blocks E2Fs transactivating domain and recruits chromatin-modifying enzymes that actively repress transcription. Cyclin and CDK-dependent phosphorylation of RB1 induces its dissociation from E2Fs, thereby activating transcription of E2F responsive genes and triggering entry into S phase. RB1 also promotes the G0-G1 transition upon phosphorylation and activation by CDK3/cyclin-C. Directly involved in heterochromatin formation by maintaining overall chromatin structure and, in particular, that of constitutive heterochromatin by stabilizing histone methylation. Recruits and targets histone methyltransferases SUV39H1, KMT5B and KMT5C, leading to epigenetic transcriptional repression. Controls histone H4 'Lys-20' trimethylation. Inhibits the intrinsic kinase activity of TAF1. Mediates transcriptional repression by SMARCA4/BRG1 by recruiting a histone deacetylase (HDAC) complex to the c-FOS promoter. In resting neurons, transcription of the c-FOS promoter is inhibited by BRG1-dependent recruitment of a phospho-RB1-HDAC1 repressor complex. Upon calcium influx, RB1 is dephosphorylated by calcineurin, which leads to release of the repressor complex. In terms of biological role, (Microbial infection) In case of viral infections, interactions with SV40 large T antigen, HPV E7 protein or adenovirus E1A protein induce the disassembly of RB1-E2F1 complex thereby disrupting RB1's activity. This Homo sapiens (Human) protein is Retinoblastoma-associated protein (RB1).